A 561-amino-acid polypeptide reads, in one-letter code: MTDAGKKERVSILCVGSPSITTLLGWRLQQSSVVTCQETIMFFNAPEPSTNVFTIQSKKFGTRKYRPTYRLSKLEEVTSDSEPFDYVFVSIKPNSRNFQLSNILEPVITAKHTCIVYNSTGAIGVEEALQRQYPENPIFSLITHTPVSQRSVDEFFFGDCAPFYLAPAGSNLEIDQLSRLVEILEGGEISSEILDTLLPLEIEDLALPLSLYPLTVLTQNPNLPKLLERPDINDLHQGILQELDSLCNCLGSSLDVKKLSKQRETLLSHMQVNPAFREYRSNRPVEIVQYLHYCIDLATKQSLQVPRLRTISALISSIQHLPLVQPHHMNDMHGPTDNSPKKNKVLVNMRPINPSSFVSDRHSPLHPYSVPENGKPNMGRIPSAPSLSKGRAMTADNMDMLSLTTRRSRRSLYSPSLMQMQQSLKSDYEGLGRTFDPRFAPRGSPPVRGGKNVLSPEAKEHTHKNISPESSRFGTPSDPNSSSQSLGNEVLSRPNSNSNSAESRNGETDDSGESETYFTLMNNNKGVEPRASVASETSSMTVIPNAMRRFPLARGTSRMKS.

Disordered regions lie at residues 369–390 (SVPE…LSKG) and 429–515 (EGLG…GESE). Phosphoserine is present on Ser-383. Polar residues predominate over residues 465–503 (NISPESSRFGTPSDPNSSSQSLGNEVLSRPNSNSNSAES).

This is an uncharacterized protein from Schizosaccharomyces pombe (strain 972 / ATCC 24843) (Fission yeast).